A 200-amino-acid polypeptide reads, in one-letter code: Large ribosomal subunit protein bL9 (200 aa).

The protein belongs to the bacterial ribosomal protein bL9 family.

Binds to the 23S rRNA. The chain is Large ribosomal subunit protein bL9 from Ruegeria pomeroyi (strain ATCC 700808 / DSM 15171 / DSS-3) (Silicibacter pomeroyi).